The sequence spans 284 residues: Pantothenate synthetase (284 aa).

Residue 30–37 (MGNLHDGH) coordinates ATP. The Proton donor role is filled by His37. A (R)-pantoate-binding site is contributed by Gln61. Gln61 is a beta-alanine binding site. 149–152 (GEKD) lines the ATP pocket. A (R)-pantoate-binding site is contributed by Gln155. Residues Ile178 and 186–189 (LSSR) contribute to the ATP site.

Belongs to the pantothenate synthetase family. In terms of assembly, homodimer.

Its subcellular location is the cytoplasm. The enzyme catalyses (R)-pantoate + beta-alanine + ATP = (R)-pantothenate + AMP + diphosphate + H(+). It functions in the pathway cofactor biosynthesis; (R)-pantothenate biosynthesis; (R)-pantothenate from (R)-pantoate and beta-alanine: step 1/1. In terms of biological role, catalyzes the condensation of pantoate with beta-alanine in an ATP-dependent reaction via a pantoyl-adenylate intermediate. This is Pantothenate synthetase from Salmonella typhi.